We begin with the raw amino-acid sequence, 293 residues long: Glutamyl-Q tRNA(Asp) synthetase (293 aa).

L-glutamate is bound by residues 9 to 13 (RFAPS) and Glu-45. Positions 12–22 (PSPSGSLHFGS) match the 'HIGH' region motif. Zn(2+) is bound by residues Cys-101, Cys-103, Tyr-115, and Cys-119. 2 residues coordinate L-glutamate: Tyr-172 and Arg-190. Positions 228–232 (KLSKQ) match the 'KMSKS' region motif. Lys-231 lines the ATP pocket.

The protein belongs to the class-I aminoacyl-tRNA synthetase family. GluQ subfamily. The cofactor is Zn(2+).

In terms of biological role, catalyzes the tRNA-independent activation of glutamate in presence of ATP and the subsequent transfer of glutamate onto a tRNA(Asp). Glutamate is transferred on the 2-amino-5-(4,5-dihydroxy-2-cyclopenten-1-yl) moiety of the queuosine in the wobble position of the QUC anticodon. The sequence is that of Glutamyl-Q tRNA(Asp) synthetase from Shewanella frigidimarina (strain NCIMB 400).